The sequence spans 440 residues: tRNA(Ile)-lysidine synthase (440 aa).

ATP is bound at residue 25–30 (SGGVDS).

The protein belongs to the tRNA(Ile)-lysidine synthase family.

The protein resides in the cytoplasm. It carries out the reaction cytidine(34) in tRNA(Ile2) + L-lysine + ATP = lysidine(34) in tRNA(Ile2) + AMP + diphosphate + H(+). Ligates lysine onto the cytidine present at position 34 of the AUA codon-specific tRNA(Ile) that contains the anticodon CAU, in an ATP-dependent manner. Cytidine is converted to lysidine, thus changing the amino acid specificity of the tRNA from methionine to isoleucine. This is tRNA(Ile)-lysidine synthase from Vibrio cholerae serotype O1 (strain ATCC 39541 / Classical Ogawa 395 / O395).